The primary structure comprises 253 residues: 3-deoxy-manno-octulosonate cytidylyltransferase (253 aa).

It belongs to the KdsB family.

The protein localises to the cytoplasm. The catalysed reaction is 3-deoxy-alpha-D-manno-oct-2-ulosonate + CTP = CMP-3-deoxy-beta-D-manno-octulosonate + diphosphate. Its pathway is nucleotide-sugar biosynthesis; CMP-3-deoxy-D-manno-octulosonate biosynthesis; CMP-3-deoxy-D-manno-octulosonate from 3-deoxy-D-manno-octulosonate and CTP: step 1/1. The protein operates within bacterial outer membrane biogenesis; lipopolysaccharide biosynthesis. In terms of biological role, activates KDO (a required 8-carbon sugar) for incorporation into bacterial lipopolysaccharide in Gram-negative bacteria. This is 3-deoxy-manno-octulosonate cytidylyltransferase from Idiomarina loihiensis (strain ATCC BAA-735 / DSM 15497 / L2-TR).